Reading from the N-terminus, the 342-residue chain is tRNA(Ile)-lysidine synthase (342 aa).

31 to 36 (SGGQDS) contacts ATP.

It belongs to the tRNA(Ile)-lysidine synthase family.

The protein localises to the cytoplasm. It catalyses the reaction cytidine(34) in tRNA(Ile2) + L-lysine + ATP = lysidine(34) in tRNA(Ile2) + AMP + diphosphate + H(+). In terms of biological role, ligates lysine onto the cytidine present at position 34 of the AUA codon-specific tRNA(Ile) that contains the anticodon CAU, in an ATP-dependent manner. Cytidine is converted to lysidine, thus changing the amino acid specificity of the tRNA from methionine to isoleucine. The chain is tRNA(Ile)-lysidine synthase from Nostoc sp. (strain PCC 7120 / SAG 25.82 / UTEX 2576).